Here is a 78-residue protein sequence, read N- to C-terminus: Mandibular organ-inhibiting hormone 2 (78 aa).

Cystine bridges form between Cys7-Cys44, Cys24-Cys40, and Cys27-Cys53.

It belongs to the arthropod CHH/MIH/GIH/VIH hormone family. As to expression, produced by the medulla terminalis X-organ in the eyestalks and transported to the sinus gland where it is stored and released.

The protein localises to the secreted. In terms of biological role, represses the synthesis of methyl farnesoate, the precursor of insect juvenile hormone III in the mandibular organ. This chain is Mandibular organ-inhibiting hormone 2, found in Cancer pagurus (Rock crab).